We begin with the raw amino-acid sequence, 277 residues long: DNA polymerase epsilon subunit C (277 aa).

Composition is skewed to polar residues over residues Met-1–Ala-16 and Glu-24–Pro-39. The interval Met-1–Ser-91 is disordered. The span at Glu-69–Ser-89 shows a compositional bias: acidic residues.

In terms of assembly, heterotetramer. Consists of four subunits: POL2, DPB2, DPB3 and DPB4.

Its subcellular location is the nucleus. In terms of biological role, as accessory component of the DNA polymerase epsilon (DNA polymerase II) participates in chromosomal DNA replication. This Debaryomyces hansenii (strain ATCC 36239 / CBS 767 / BCRC 21394 / JCM 1990 / NBRC 0083 / IGC 2968) (Yeast) protein is DNA polymerase epsilon subunit C (DPB3).